Consider the following 196-residue polypeptide: ATP-dependent Clp protease proteolytic subunit (196 aa).

Ser101 (nucleophile) is an active-site residue. Residue His126 is part of the active site.

This sequence belongs to the peptidase S14 family. In terms of assembly, component of the chloroplastic Clp protease core complex.

It localises to the plastid. It is found in the chloroplast stroma. It catalyses the reaction Hydrolysis of proteins to small peptides in the presence of ATP and magnesium. alpha-casein is the usual test substrate. In the absence of ATP, only oligopeptides shorter than five residues are hydrolyzed (such as succinyl-Leu-Tyr-|-NHMec, and Leu-Tyr-Leu-|-Tyr-Trp, in which cleavage of the -Tyr-|-Leu- and -Tyr-|-Trp bonds also occurs).. Its function is as follows. Cleaves peptides in various proteins in a process that requires ATP hydrolysis. Has a chymotrypsin-like activity. Plays a major role in the degradation of misfolded proteins. The protein is ATP-dependent Clp protease proteolytic subunit of Morus indica (Mulberry).